Here is a 201-residue protein sequence, read N- to C-terminus: Glycerol-3-phosphate acyltransferase (201 aa).

The next 6 helical transmembrane spans lie at 10 to 30 (MLIGALIFGYVLGSIPFGLIL), 60 to 80 (LAAATLILDALKGTAAALIAA), 86 to 106 (AAIAAGFGAFIGHLFPVWIGF), 116 to 136 (LGVLIGLAWAGALVFAAAWIV), 139 to 159 (LLTRYSSLSALVASLVVPIAL), and 166 to 186 (ALAALFAIMTVIVFIKHRANI).

It belongs to the PlsY family. As to quaternary structure, probably interacts with PlsX.

Its subcellular location is the cell inner membrane. It carries out the reaction an acyl phosphate + sn-glycerol 3-phosphate = a 1-acyl-sn-glycero-3-phosphate + phosphate. The protein operates within lipid metabolism; phospholipid metabolism. Functionally, catalyzes the transfer of an acyl group from acyl-phosphate (acyl-PO(4)) to glycerol-3-phosphate (G3P) to form lysophosphatidic acid (LPA). This enzyme utilizes acyl-phosphate as fatty acyl donor, but not acyl-CoA or acyl-ACP. This Brucella ovis (strain ATCC 25840 / 63/290 / NCTC 10512) protein is Glycerol-3-phosphate acyltransferase.